The primary structure comprises 184 residues: dITP/XTP pyrophosphatase (184 aa).

Residue 7-12 (TSNPGK) coordinates substrate. Mg(2+) contacts are provided by glutamate 36 and aspartate 65. Residue aspartate 65 is the Proton acceptor of the active site. Residues serine 66, 139-142 (FGFD), lysine 162, and 167-168 (HR) contribute to the substrate site.

It belongs to the HAM1 NTPase family. In terms of assembly, homodimer. The cofactor is Mg(2+).

The catalysed reaction is XTP + H2O = XMP + diphosphate + H(+). It carries out the reaction dITP + H2O = dIMP + diphosphate + H(+). It catalyses the reaction ITP + H2O = IMP + diphosphate + H(+). Functionally, pyrophosphatase that catalyzes the hydrolysis of nucleoside triphosphates to their monophosphate derivatives, with a high preference for the non-canonical purine nucleotides XTP (xanthosine triphosphate), dITP (deoxyinosine triphosphate) and ITP. Seems to function as a house-cleaning enzyme that removes non-canonical purine nucleotides from the nucleotide pool, thus preventing their incorporation into DNA/RNA and avoiding chromosomal lesions. This chain is dITP/XTP pyrophosphatase, found in Thermococcus kodakarensis (strain ATCC BAA-918 / JCM 12380 / KOD1) (Pyrococcus kodakaraensis (strain KOD1)).